Reading from the N-terminus, the 101-residue chain is Large ribosomal subunit protein bL21 (101 aa).

The protein belongs to the bacterial ribosomal protein bL21 family. In terms of assembly, part of the 50S ribosomal subunit. Contacts protein L20.

In terms of biological role, this protein binds to 23S rRNA in the presence of protein L20. The polypeptide is Large ribosomal subunit protein bL21 (Corynebacterium diphtheriae (strain ATCC 700971 / NCTC 13129 / Biotype gravis)).